A 606-amino-acid polypeptide reads, in one-letter code: Elongation factor 4 (606 aa).

A tr-type G domain is found at 7–189 (SRIRNFCIIA…AVVDRVPPPK (183 aa)). GTP contacts are provided by residues 19 to 24 (DHGKST) and 136 to 139 (NKID).

Belongs to the TRAFAC class translation factor GTPase superfamily. Classic translation factor GTPase family. LepA subfamily.

The protein resides in the cell inner membrane. It carries out the reaction GTP + H2O = GDP + phosphate + H(+). Its function is as follows. Required for accurate and efficient protein synthesis under certain stress conditions. May act as a fidelity factor of the translation reaction, by catalyzing a one-codon backward translocation of tRNAs on improperly translocated ribosomes. Back-translocation proceeds from a post-translocation (POST) complex to a pre-translocation (PRE) complex, thus giving elongation factor G a second chance to translocate the tRNAs correctly. Binds to ribosomes in a GTP-dependent manner. The protein is Elongation factor 4 of Parasynechococcus marenigrum (strain WH8102).